We begin with the raw amino-acid sequence, 309 residues long: MEKFEVHILGCGSALPTTRHFATSQVVNIREKLFMIDCGEGAQMQLRKSKLKFTRLNHIFISHLHGDHCFGLMGLISTFGMLGRTATLYIHCHAELERLLTPQLDFFCKGMSYKVVFQTFDPGKAEIIYDDRSLTIETIPLRHRIPTCGFLFSEKQIPAHIRRDMIDFYEIPVYELNRIKNGADYTLPDGKIVPNNKLTIPSALPRRYAYCSDTIYLPHIIEQIYGVDLLFHEATFAQSEQARAKETFHTTASQAGEIARTAKVKQLLIGHFSARYEDESILLQEASDIFPNTLLARETLKISIESIKP.

7 residues coordinate Zn(2+): histidine 63, histidine 65, aspartate 67, histidine 68, histidine 143, aspartate 213, and histidine 271. The active-site Proton acceptor is aspartate 67.

This sequence belongs to the RNase Z family. Homodimer. The cofactor is Zn(2+).

The catalysed reaction is Endonucleolytic cleavage of RNA, removing extra 3' nucleotides from tRNA precursor, generating 3' termini of tRNAs. A 3'-hydroxy group is left at the tRNA terminus and a 5'-phosphoryl group is left at the trailer molecule.. In terms of biological role, zinc phosphodiesterase, which displays some tRNA 3'-processing endonuclease activity. Probably involved in tRNA maturation, by removing a 3'-trailer from precursor tRNA. The sequence is that of Ribonuclease Z from Phocaeicola vulgatus (strain ATCC 8482 / DSM 1447 / JCM 5826 / CCUG 4940 / NBRC 14291 / NCTC 11154) (Bacteroides vulgatus).